Here is a 528-residue protein sequence, read N- to C-terminus: Dihydromonacolin L monooxygenase LovA (528 aa).

The Cytoplasmic portion of the chain corresponds to 1-23; that stretch reads MTVDALTQPHHLLSLAWNDTQQH. The chain crosses the membrane as a helical; Signal-anchor for type II membrane protein span at residues 24–44; it reads GSWFAPLVTTSAGLLCLLLYL. Residues 45–528 lie on the Lumenal side of the membrane; it reads CSSGRRSELP…DEDIRLPGSL (484 aa). The N-linked (GlcNAc...) asparagine glycan is linked to Asn399. Cys465 contributes to the heme binding site.

The protein belongs to the cytochrome P450 family. Heme serves as cofactor.

It localises to the membrane. The protein localises to the endoplasmic reticulum membrane. The catalysed reaction is dihydromonacolin L carboxylate + reduced [NADPH--hemoprotein reductase] + O2 = monacolin L carboxylate + oxidized [NADPH--hemoprotein reductase] + 2 H2O + H(+). The enzyme catalyses monacolin L carboxylate + reduced [NADPH--hemoprotein reductase] + O2 = monacolin J carboxylate + oxidized [NADPH--hemoprotein reductase] + H2O + H(+). It functions in the pathway polyketide biosynthesis; lovastatin biosynthesis. Dihydromonacolin L monooxygenase; part of the gene cluster that mediates the biosynthesis of lovastatin (also known as mevinolin, mevacor or monacolin K), a hypolipidemic inhibitor of (3S)-hydroxymethylglutaryl-coenzyme A (HMG-CoA) reductase (HMGR). The first step in the biosynthesis of lovastatin is the production of dihydromonacolin L acid by the lovastatin nonaketide synthase lovB and the trans-acting enoyl reductase lovC via condensation of one acetyl-CoA unit and 8 malonyl-CoA units. Dihydromonacolin L acid is released from lovB by the thioesterase lovG. Next, dihydromonacolin L acid is oxidized by the dihydromonacolin L monooxygenase lovA twice to form monacolin J acid. The 2-methylbutyrate moiety of lovastatin is synthesized by the lovastatin diketide synthase lovF via condensation of one acetyl-CoA unit and one malonyl-CoA unit. Finally, the covalent attachment of this moiety to monacolin J acid is catalyzed by the transesterase lovD to yield lovastatin. LovD has broad substrate specificity and can also convert monacolin J to simvastatin using alpha-dimethylbutanoyl-S-methyl-3-mercaptopropionate (DMB-S-MMP) as the thioester acyl donor, and can also catalyze the reverse reaction and function as hydrolase in vitro. LovD has much higher activity with LovF-bound 2-methylbutanoate than with free diketide substrates. The chain is Dihydromonacolin L monooxygenase LovA from Aspergillus terreus (strain NIH 2624 / FGSC A1156).